The chain runs to 711 residues: DNA topoisomerase 1 (711 aa).

Residues 3-134 (KNLVVIESPN…KCQRITFNEI (132 aa)) enclose the Toprim domain. 2 residues coordinate Mg(2+): glutamate 9 and aspartate 102. Positions 150-604 (DQSWVQSQFA…FWSNFKEEVK (455 aa)) constitute a Topo IA-type catalytic domain. The interval 183–188 (SAGRVQ) is interaction with DNA. Tyrosine 340 (O-(5'-phospho-DNA)-tyrosine intermediate) is an active-site residue. C4-type zinc fingers lie at residues 624–652 (CPSCASPLLYRYTKRGNEKFVGCSNFPNC) and 673–702 (CPECNSQLVKRRTKFNPNKTFVGCSNFPRC).

This sequence belongs to the type IA topoisomerase family. Monomer. Mg(2+) serves as cofactor.

The enzyme catalyses ATP-independent breakage of single-stranded DNA, followed by passage and rejoining.. Functionally, releases the supercoiling and torsional tension of DNA, which is introduced during the DNA replication and transcription, by transiently cleaving and rejoining one strand of the DNA duplex. Introduces a single-strand break via transesterification at a target site in duplex DNA. The scissile phosphodiester is attacked by the catalytic tyrosine of the enzyme, resulting in the formation of a DNA-(5'-phosphotyrosyl)-enzyme intermediate and the expulsion of a 3'-OH DNA strand. The free DNA strand then undergoes passage around the unbroken strand, thus removing DNA supercoils. Finally, in the religation step, the DNA 3'-OH attacks the covalent intermediate to expel the active-site tyrosine and restore the DNA phosphodiester backbone. This Mycoplasma pneumoniae (strain ATCC 29342 / M129 / Subtype 1) (Mycoplasmoides pneumoniae) protein is DNA topoisomerase 1.